The following is a 212-amino-acid chain: Large ribosomal subunit protein uL3 (212 aa).

At Q153 the chain carries N5-methylglutamine.

The protein belongs to the universal ribosomal protein uL3 family. Part of the 50S ribosomal subunit. Forms a cluster with proteins L14 and L19. In terms of processing, methylated by PrmB.

One of the primary rRNA binding proteins, it binds directly near the 3'-end of the 23S rRNA, where it nucleates assembly of the 50S subunit. This Acinetobacter baylyi (strain ATCC 33305 / BD413 / ADP1) protein is Large ribosomal subunit protein uL3.